The primary structure comprises 719 residues: La-related protein 4 (719 aa).

Methionine 1 is modified (N-acetylmethionine). The interaction with PABPC1 stretch occupies residues 12 to 21 (TGLNPNAKVW). The interval 21–55 (WQEIPSGNPDGTPVTEPSWHETAATSGSHPEGHTE) is disordered. An interaction with the poly-A tract of mRNA region spans residues 107-299 (SSAISTEDLK…PIQTPTQYPS (193 aa)). The region spanning 109 to 198 (AISTEDLKEC…RPSHKRCIVI (90 aa)) is the HTH La-type RNA-binding domain. The RRM domain maps to 199-277 (LREIPETTPV…KAINTFFAKN (79 aa)). Arginine 363 carries the post-translational modification Omega-N-methylarginine. Disordered regions lie at residues 363–398 (RPFP…LSRS) and 437–470 (GRGR…APTP). Residues 376 to 389 (SSSGSEHSTEGSVS) show a composition bias toward low complexity. Residues serine 387 and serine 396 each carry the phosphoserine modification. The segment covering 439–448 (GRRTLFRGRR) has biased composition (basic residues). Over residues 460 to 470 (PAATEAKAPTP) the composition is skewed to low complexity. Serine 500 is subject to Phosphoserine. Polar residues-rich tracts occupy residues 529 to 538 (DCTSAPLSIS) and 578 to 599 (SSPT…SNIN). 3 disordered regions span residues 529-562 (DCTS…QMED), 576-601 (PVSS…INPP), and 615-719 (AEVC…RSPK). Residues serine 578, serine 592, and serine 642 each carry the phosphoserine modification. A Phosphothreonine modification is found at threonine 644. Over residues 654-673 (KPVEKPHEKPETRASKDHSG) the composition is skewed to basic and acidic residues. Omega-N-methylarginine is present on arginine 681. The residue at position 717 (serine 717) is a Phosphoserine.

Interacts (via N-terminal region) with PABPC1. Interacts with RACK1.

The protein resides in the cytoplasm. Its subcellular location is the stress granule. It is found in the cytosol. Its function is as follows. RNA binding protein that binds to the poly-A tract of mRNA molecules. Associates with the 40S ribosomal subunit and with polysomes. Plays a role in the regulation of mRNA translation. Plays a role in the regulation of cell morphology and cytoskeletal organization. The sequence is that of La-related protein 4 (Larp4) from Mus musculus (Mouse).